A 168-amino-acid chain; its full sequence is MKGRIELGDVTPHNIKQLKRLNQVIFPVSYNDKFYKDVLEVGELAKLAYFNDIAVGAVCCRVDHSQNQKRLYIMTLGCLAPYRRLGIGTKMLNHVLNICEKDGTFDNIYLHVQISNESAIDFYQKFGFEIIETKKNYYKRIEPADAHVLQKSLRSPCAPPAGELQKAD.

Positions 5 to 154 constitute an N-acetyltransferase domain; sequence IELGDVTPHN…DAHVLQKSLR (150 aa). Tyrosine 30 is a binding site for substrate. Tyrosine 72 is a catalytic residue. Methionine 74 provides a ligand contact to substrate. 76 to 89 is a binding site for acetyl-CoA; it reads LGCLAPYRRLGIGT. The active site involves histidine 111. 116–125 serves as a coordination point for CoA; sequence NESAIDFYQK. A substrate region spans residues 137 to 140; that stretch reads YYKR.

The protein belongs to the acetyltransferase family. GNAT subfamily. In terms of assembly, interacts with naa35.

It is found in the cytoplasm. The protein resides in the nucleus. It catalyses the reaction N-terminal L-methionyl-L-alanyl-[protein] + acetyl-CoA = N-terminal N(alpha)-acetyl-L-methionyl-L-alanyl-[protein] + CoA + H(+). It carries out the reaction N-terminal L-methionyl-L-seryl-[protein] + acetyl-CoA = N-terminal N(alpha)-acetyl-L-methionyl-L-seryl-[protein] + CoA + H(+). The enzyme catalyses N-terminal L-methionyl-L-valyl-[protein] + acetyl-CoA = N-terminal N(alpha)-acetyl-L-methionyl-L-valyl-[protein] + CoA + H(+). The catalysed reaction is N-terminal L-methionyl-L-threonyl-[protein] + acetyl-CoA = N-terminal N(alpha)-acetyl-L-methionyl-L-threonyl-[protein] + CoA + H(+). It catalyses the reaction N-terminal L-methionyl-L-lysyl-[protein] + acetyl-CoA = N-terminal N(alpha)-acetyl-L-methionyl-L-lysyl-[protein] + CoA + H(+). It carries out the reaction N-terminal L-methionyl-L-leucyl-[protein] + acetyl-CoA = N-terminal N(alpha)-acetyl-L-methionyl-L-leucyl-[protein] + CoA + H(+). The enzyme catalyses N-terminal L-methionyl-L-phenylalanyl-[protein] + acetyl-CoA = N-terminal N(alpha)-acetyl-L-methionyl-L-phenylalanyl-[protein] + CoA + H(+). The catalysed reaction is N-terminal L-methionyl-L-tyrosyl-[protein] + acetyl-CoA = N-terminal N(alpha)-acetyl-L-methionyl-L-tyrosyl-[protein] + CoA + H(+). N-alpha-acetyltransferase that acetylates the N-terminus of proteins that retain their initiating methionine. Has a broad substrate specificity: able to acetylate the initiator methionine of most peptides, except for those with a proline in second position. Also displays N-epsilon-acetyltransferase activity by mediating acetylation of the side chain of specific lysines on proteins. The relevance of N-epsilon-acetyltransferase activity is however unclear. Required for sister chromatid cohesion during mitosis by promoting binding of CDCA5/sororin to cohesin. Essential in embryonic cell proliferation and survival. The protein is N-alpha-acetyltransferase 50 (naa50) of Danio rerio (Zebrafish).